Here is a 59-residue protein sequence, read N- to C-terminus: Large ribosomal subunit protein bL32 (59 aa).

Residues 1–59 (MAVQQNRKSRSRRGMRRSHDALSSAALSIDPTTGEKHRRHHVTPDGFYRGKKVVEVSQD) are disordered. The segment covering 7 to 16 (RKSRSRRGMR) has biased composition (basic residues).

Belongs to the bacterial ribosomal protein bL32 family.

The sequence is that of Large ribosomal subunit protein bL32 from Hahella chejuensis (strain KCTC 2396).